The sequence spans 178 residues: Protein Vhl (178 aa).

This sequence belongs to the VHL family. As to quaternary structure, part of a complex with Cul2, Roc1a/Rbx1 and the elongin BC complex. Interacts with sima/Hif1a. Interacts with itself. Interacts with mgr and betaTub56D/tubulin beta-1 chain. Interacts with tubulin alpha-beta heterodimers by itself or in complex with mgr. Interacts with microtubules (MTs).

The protein operates within protein modification; protein ubiquitination. In terms of biological role, involved in development of tracheal vasculature. Probably involved in halting cell migration at the end of vascular tube outgrowth. Possesses E3 ubiquitin ligase activity when in complex with Elongin BC complex, Cul2 and Rox1a/Rbx1, and can target sima/Hif1a for ubiquitination. May play a critical role in promoting microtubule stabilization when tubulins are correctly folded by the prefoldin complex. If tubulin is incorrectly folded, may promote its degradation. This Drosophila melanogaster (Fruit fly) protein is Protein Vhl.